The following is a 56-amino-acid chain: PI-actitoxin-Afv2b (56 aa).

Positions 5-55 (CLLPMKVGPCRARVPRFYYNSSSGKCEGFTYGGCGANANKFQTKAQCEKAC) constitute a BPTI/Kunitz inhibitor domain. 3 disulfides stabilise this stretch: Cys5-Cys55, Cys14-Cys38, and Cys30-Cys51.

The protein belongs to the venom Kunitz-type family. Sea anemone type 2 potassium channel toxin subfamily. As to expression, expressed by acrorhagi.

The protein localises to the secreted. The protein resides in the nematocyst. Its function is as follows. Serine protease inhibitor that is strongly active against trypsin (900 IU/mg) and moderately active against plasmin. In Anthopleura fuscoviridis (Sea anemone), this protein is PI-actitoxin-Afv2b.